We begin with the raw amino-acid sequence, 89 residues long: Small ribosomal subunit protein uS15 (89 aa).

The protein belongs to the universal ribosomal protein uS15 family. In terms of assembly, part of the 30S ribosomal subunit. Forms a bridge to the 50S subunit in the 70S ribosome, contacting the 23S rRNA.

One of the primary rRNA binding proteins, it binds directly to 16S rRNA where it helps nucleate assembly of the platform of the 30S subunit by binding and bridging several RNA helices of the 16S rRNA. Its function is as follows. Forms an intersubunit bridge (bridge B4) with the 23S rRNA of the 50S subunit in the ribosome. The polypeptide is Small ribosomal subunit protein uS15 (Arthrobacter sp. (strain FB24)).